A 921-amino-acid chain; its full sequence is Isoleucine--tRNA ligase 1 (921 aa).

The 'HIGH' region motif lies at 57–67 (PYANGDIHMGH). Position 552 (E552) interacts with L-isoleucyl-5'-AMP. Positions 593–597 (KMSKS) match the 'KMSKS' region motif. K596 is a binding site for ATP. Zn(2+) is bound by residues C888, C891, C908, and C911.

The protein belongs to the class-I aminoacyl-tRNA synthetase family. IleS type 1 subfamily. As to quaternary structure, monomer. The cofactor is Zn(2+).

The protein localises to the cytoplasm. The catalysed reaction is tRNA(Ile) + L-isoleucine + ATP = L-isoleucyl-tRNA(Ile) + AMP + diphosphate. In terms of biological role, catalyzes the attachment of isoleucine to tRNA(Ile). As IleRS can inadvertently accommodate and process structurally similar amino acids such as valine, to avoid such errors it has two additional distinct tRNA(Ile)-dependent editing activities. One activity is designated as 'pretransfer' editing and involves the hydrolysis of activated Val-AMP. The other activity is designated 'posttransfer' editing and involves deacylation of mischarged Val-tRNA(Ile). The polypeptide is Isoleucine--tRNA ligase 1 (Bacillus cereus (strain ATCC 10987 / NRS 248)).